The primary structure comprises 283 residues: Bifunctional protein FolD (283 aa).

Residues 165–167 (GRS), serine 190, and valine 231 contribute to the NADP(+) site.

It belongs to the tetrahydrofolate dehydrogenase/cyclohydrolase family. As to quaternary structure, homodimer.

The catalysed reaction is (6R)-5,10-methylene-5,6,7,8-tetrahydrofolate + NADP(+) = (6R)-5,10-methenyltetrahydrofolate + NADPH. It carries out the reaction (6R)-5,10-methenyltetrahydrofolate + H2O = (6R)-10-formyltetrahydrofolate + H(+). It participates in one-carbon metabolism; tetrahydrofolate interconversion. In terms of biological role, catalyzes the oxidation of 5,10-methylenetetrahydrofolate to 5,10-methenyltetrahydrofolate and then the hydrolysis of 5,10-methenyltetrahydrofolate to 10-formyltetrahydrofolate. The polypeptide is Bifunctional protein FolD (Bacillus pumilus (strain SAFR-032)).